We begin with the raw amino-acid sequence, 1099 residues long: Exonuclease/helicase subunit RexB (1099 aa).

Residues C766, C1056, C1059, and C1065 each coordinate [4Fe-4S] cluster.

It belongs to the helicase family. AddB/RexB type 2 subfamily. As to quaternary structure, heterodimer of RexA (AddA) and RexB. Mg(2+) serves as cofactor. The cofactor is [4Fe-4S] cluster.

Functionally, the heterodimer acts both as an ATP-dependent DNA helicase and an ATP-dependent, dual-direction single-stranded exonuclease. Recognizes the L.lactis chi site (5'-GCGCGTG-3'), which stimulates homologous recombination. This subunit has 5'-&gt;3' exonuclease activity. Its function is as follows. The heterodimer acts as both an ATP-dependent DNA helicase and an ATP-dependent, dual-direction single-stranded exonuclease. Recognizes the chi site generating a DNA molecule suitable for the initiation of homologous recombination. This subunit has 5' -&gt; 3' nuclease activity but not helicase activity. This is Exonuclease/helicase subunit RexB from Lactococcus lactis subsp. cremoris (strain MG1363).